A 255-amino-acid chain; its full sequence is F-box/SPRY domain-containing protein 1 (255 aa).

The F-box domain occupies 3–51; it reads DPVAALCNYNVLEVIFSYLELEDLNHCSQVCKSWYHFLNDENSDVWRWH. One can recognise a B30.2/SPRY domain in the interval 61-253; that stretch reads LKSDLLASVS…VSMVYLGTPL (193 aa).

The protein belongs to the FBXO45/Fsn family. Component of an E3 ubiquitin ligase complex composed of hiw and Fsn.

It is found in the synapse. Its pathway is protein modification; protein ubiquitination. Required in the presynaptic motoneuron to down-regulate the levels of wnd and restrain synaptic terminal growth at the neuromuscular junction (NMJ). In Drosophila yakuba (Fruit fly), this protein is F-box/SPRY domain-containing protein 1.